A 194-amino-acid chain; its full sequence is Yellow fluorescent protein (194 aa).

Lumazine-binding repeat units follow at residues 1–98 and 99–194; these read MFKG…SGGH and ILSA…NQCW. 179 to 183 lines the FMN pocket; the sequence is KVNVE.

Homodimer. Requires FMN as cofactor.

Its function is as follows. Antenna protein that modulates the color of the bioluminescence emission of the luciferase. In the presence of YFP and only at temperatures below 20 degrees Celsius, luciferase exhibits a bimodal emission spectrum with a new peak at 545 nM (yellow), in addition to the one at 485 nM. The protein is Yellow fluorescent protein (luxY) of Aliivibrio fischeri (Vibrio fischeri).